Here is an 858-residue protein sequence, read N- to C-terminus: DNA mismatch repair protein MutS (858 aa).

Position 600–607 (600–607 (GPNMSGKS)) interacts with ATP. The segment at 803–823 (EAASDEVDDNNSENSPMTDAE) is disordered.

It belongs to the DNA mismatch repair MutS family.

Its function is as follows. This protein is involved in the repair of mismatches in DNA. It is possible that it carries out the mismatch recognition step. This protein has a weak ATPase activity. In Lactobacillus helveticus (strain DPC 4571), this protein is DNA mismatch repair protein MutS.